A 552-amino-acid polypeptide reads, in one-letter code: Hyaluronan synthase 2 (552 aa).

Over 1-11 the chain is Cytoplasmic; it reads MHCERFLCILR. Residues 12–32 form a helical membrane-spanning segment; sequence IIGTTLFGVSLLLGITAAYIV. At 33 to 45 the chain is on the extracellular side; sequence GYQFIQTDNYYFS. The chain crosses the membrane as a helical span at residues 46–66; that stretch reads FGLYGAFLASHLIIQSLFAFL. Topologically, residues 67–374 are cytoplasmic; that stretch reads EHRKMKKSLE…NAMWFHKHHL (308 aa). At Thr-110 the chain carries Phosphothreonine. Lys-190 is covalently cross-linked (Glycyl lysine isopeptide (Lys-Gly) (interchain with G-Cter in ubiquitin)). The O-linked (GlcNAc) serine glycan is linked to Ser-221. Residue Thr-328 is modified to Phosphothreonine. The helical transmembrane segment at 375–395 threads the bilayer; that stretch reads WMTYEAVITGFFPFFLIATVI. The Extracellular segment spans residues 396 to 402; it reads QLFYRGK. Residues 403–423 traverse the membrane as a helical segment; sequence IWNILLFLLTVQLVGLIKSSF. Topologically, residues 424–429 are cytoplasmic; sequence ASCLRG. Residues 430–450 form a helical membrane-spanning segment; sequence NIVMVFMSLYSVLYMSSLLPA. Residues 451–475 lie on the Extracellular side of the membrane; that stretch reads KMFAIATINKAGWGTSGRKTIVVNF. Residues 476–496 form a helical membrane-spanning segment; that stretch reads IGLIPVSVWFTILLGGVIFTI. At 497-510 the chain is on the cytoplasmic side; the sequence is YKESKKPFSESKQT. Residues 511 to 531 form a helical membrane-spanning segment; the sequence is VLIVGTLLYACYWVMLLTLYV. At 532–552 the chain is on the extracellular side; that stretch reads VLINKCGRRKKGQQYDMVLDV.

It belongs to the NodC/HAS family. As to quaternary structure, homodimer; dimerization promotes enzymatic activity. Forms heterodimer with HAS3. Forms heterodimer with HAS1. Requires Mg(2+) as cofactor. In terms of processing, phosphorylation at Thr-328 is essential for hyaluronan synthase activity. O-GlcNAcylation at Ser-221 increases the stability of HAS2 and plasma membrane localization. Post-translationally, ubiquitination at Lys-190; this ubiquitination is essential for hyaluronan synthase activity and homo- or hetero-oligomerization. Can also be poly-ubiquitinated. Deubiquitinated by USP17L22/USP17 and USP4. USP17L22/USP17 efficiently removes 'Lys-63'- and 'Lys-48'-linked polyubiquitin chains, whereas USP4 preferentially removes monoubiquitination and, partially, both 'Lys-63'- and 'Lys-48'-linked polyubiquitin chain. Overexpressed in skin fibroblasts.

The protein resides in the cell membrane. It is found in the endoplasmic reticulum membrane. Its subcellular location is the vesicle. The protein localises to the golgi apparatus membrane. It localises to the lysosome. The enzyme catalyses [hyaluronan](n) + UDP-N-acetyl-alpha-D-glucosamine = N-acetyl-beta-D-glucosaminyl-(1-&gt;4)-[hyaluronan](n) + UDP + H(+). It catalyses the reaction N-acetyl-beta-D-glucosaminyl-(1-&gt;4)-[hyaluronan](n) + UDP-alpha-D-glucuronate = [hyaluronan](n+1) + UDP + H(+). Its pathway is glycan biosynthesis; hyaluronan biosynthesis. Functionally, catalyzes the addition of GlcNAc or GlcUA monosaccharides to the nascent hyaluronan polymer. Therefore, it is essential to hyaluronan synthesis a major component of most extracellular matrices that has a structural role in tissues architectures and regulates cell adhesion, migration and differentiation. This is one of three isoenzymes responsible for cellular hyaluronan synthesis and it is particularly responsible for the synthesis of high molecular mass hyaluronan. The polypeptide is Hyaluronan synthase 2 (Has2) (Heterocephalus glaber (Naked mole rat)).